The following is a 434-amino-acid chain: [Arg8]-vasotocin receptor (434 aa).

At 1–27 (MGRIANQTTASNDTDPFGRNEEVAKME) the chain is on the extracellular side. N-linked (GlcNAc...) asparagine glycans are attached at residues N6 and N12. The chain crosses the membrane as a helical span at residues 28 to 48 (ITVLSVTFFVAVIGNLSVLLA). At 49 to 67 (MHNTKKKSSRMHLFIKHLS) the chain is on the cytoplasmic side. Residues 68-88 (LADMVVAFFQVLPQLCWEITF) form a helical membrane-spanning segment. The Extracellular segment spans residues 89–98 (RFYGPDFLCR). Residues C97 and C176 are joined by a disulfide bond. A helical transmembrane segment spans residues 99-119 (IVKHLQVLGMFASTYMMVMMT). Topologically, residues 120–141 (LDRYIAICHPLKTLQQPTQRAY) are cytoplasmic. A helical transmembrane segment spans residues 142 to 162 (IMIGSTWLCSLLLSTPQYFIF). At 163 to 191 (SLSEIQNGSYVYDCWGHFIEPWGIRAYIT) the chain is on the extracellular side. Residues 192–212 (WITVGIFLIPVIILMICYGFI) traverse the membrane as a helical segment. Topologically, residues 213–257 (CHSIWKNIKCKTMRGTRNTKDGMIGKVSVSSVTIISRAKLRTVKM) are cytoplasmic. Residues 258-278 (TLVIVLAYIVCWAPFFIVQMW) traverse the membrane as a helical segment. Residues 279-295 (SVWDENFSWDDSENAAV) lie on the Extracellular side of the membrane. Residues 296–316 (TLSALLASLNSCCNPWIYMLF) form a helical membrane-spanning segment. Residues 317-434 (SGHLLYDFLR…KSSQCMSKES (118 aa)) lie on the Cytoplasmic side of the membrane.

This sequence belongs to the G-protein coupled receptor 1 family. Vasopressin/oxytocin receptor subfamily. Expressed in pituitary, liver, gills, swim bladder and lateral line.

The protein localises to the cell membrane. Binds to vasotocin. Produces an induction of membrane chloride currents indicating that it is coupled to the inositol phosphate/calcium pathway. The protein is [Arg8]-vasotocin receptor of Catostomus commersonii (White sucker).